The primary structure comprises 1141 residues: Sterol regulatory element-binding protein 2 (1141 aa).

A transcriptional activation (acidic) region spans residues 1 to 50 (MDDSGELGGLETMETLTELGDELTLGDIDEMLQFVSNQVGEFPDLFSEQL). Over 1–479 (MDDSGELGGL…PPVALGMVDR (479 aa)) the chain is Cytoplasmic. The interval 48–144 (EQLCSSFPGS…PQPQPQPQTQ (97 aa)) is disordered. Over residues 63–82 (SSGSSGSSSSSSNGRGSSSG) the composition is skewed to low complexity. Polar residues predominate over residues 88–97 (VQRSFTQVTL). Positions 98–110 (PSFSPSAASPQAP) are enriched in low complexity. The span at 114-126 (VKVSPTSVPTTPR) shows a compositional bias: polar residues. Residues 237 to 491 (QQVPVLVQPQ…ILLCVLTFLC (255 aa)) are interaction with LMNA. The 51-residue stretch at 330–380 (ERRTTHNIIEKRYRSSINDKIIELKDLVMGTDAKMHKSGVLRKAIDYIKYL) folds into the bHLH domain. A leucine-zipper region spans residues 380–401 (LQQVNHKLRQENMVLKLANQKN). A Glycyl lysine isopeptide (Lys-Gly) (interchain with G-Cter in SUMO2) cross-link involves residue lysine 464. A helical membrane pass occupies residues 480-500 (SRILLCVLTFLCLSFNPLTSL). The Lumenal segment spans residues 501–533 (LQWGGAHDSDQHPHSGSGRSVLSFESGSGGWFD). The chain crosses the membrane as a helical span at residues 534–554 (WMMPTLLLWLVNGVIVLSVFV). Over 555–1139 (KLLVHGEPVI…VKLGGGTAIA (585 aa)) the chain is Cytoplasmic. Residues serine 855 and serine 1098 each carry the phosphoserine modification.

Belongs to the SREBP family. In terms of assembly, forms a tight complex with SCAP, the SCAP-SREBP complex, in the endoplasmic reticulum membrane and the Golgi apparatus. Interacts with PAQR3; the interaction anchors the SCAP-SREBP complex to the Golgi apparatus in low cholesterol conditions. Interacts (via C-terminal domain) with RNF139. As to quaternary structure, homodimer; efficient DNA binding of the soluble transcription factor fragment requires dimerization with another bHLH protein. Interacts with LMNA. In terms of processing, processed in the Golgi apparatus, releasing the protein from the membrane. At low cholesterol the SCAP-SREBP complex is recruited into COPII vesicles for export from the endoplasmic reticulum. In the Golgi, complex SREBPs are cleaved sequentially by site-1 (MBTPS1, S1P) and site-2 (MBTPS2, S2P) protease. The first cleavage by site-1 protease occurs within the luminal loop, the second cleavage by site-2 protease occurs within the first transmembrane domain, releasing the transcription factor from the Golgi membrane. Apoptosis triggers cleavage by the cysteine proteases caspase-3 and caspase-7. Cleavage and activation is induced by mediated cholesterol efflux. Post-translationally, phosphorylated by AMPK, leading to suppress protein processing and nuclear translocation, and repress target gene expression. SCAP-free SREBF2 is ubiquitinated by the BCR(ARMC5) complex, leading to its degradation. In terms of processing, ubiquitinated; the nuclear form has a rapid turnover and is rapidly ubiquitinated and degraded by the proteasome in the nucleus. Ubiquitously expressed in adult and fetal tissues.

It localises to the endoplasmic reticulum membrane. The protein localises to the golgi apparatus membrane. The protein resides in the cytoplasmic vesicle. It is found in the COPII-coated vesicle membrane. Its subcellular location is the nucleus. Its activity is regulated as follows. Activation by cleavage is down-regulated upon activation of SIRT3-dependent PRKAA1/AMPK-alpha signaling cascade which leads to inhibition of ATP-consuming lipogenesis to restore cellular energy balance. Functionally, precursor of the transcription factor form (Processed sterol regulatory element-binding protein 2), which is embedded in the endoplasmic reticulum membrane. Low sterol concentrations promote processing of this form, releasing the transcription factor form that translocates into the nucleus and activates transcription of genes involved in cholesterol biosynthesis. Key transcription factor that regulates expression of genes involved in cholesterol biosynthesis. Binds to the sterol regulatory element 1 (SRE-1) (5'-ATCACCCCAC-3'). Has dual sequence specificity binding to both an E-box motif (5'-ATCACGTGA-3') and to SRE-1 (5'-ATCACCCCAC-3'). Regulates transcription of genes related to cholesterol synthesis pathway. The sequence is that of Sterol regulatory element-binding protein 2 from Homo sapiens (Human).